Reading from the N-terminus, the 351-residue chain is DNA polymerase IV (351 aa).

The UmuC domain occupies 4–185 (IIHVDMDCFF…LPLAKIPGVG (182 aa)). Mg(2+) contacts are provided by Asp8 and Asp103. Glu104 is an active-site residue.

Belongs to the DNA polymerase type-Y family. As to quaternary structure, monomer. Requires Mg(2+) as cofactor.

It localises to the cytoplasm. It catalyses the reaction DNA(n) + a 2'-deoxyribonucleoside 5'-triphosphate = DNA(n+1) + diphosphate. Its function is as follows. Poorly processive, error-prone DNA polymerase involved in untargeted mutagenesis. Copies undamaged DNA at stalled replication forks, which arise in vivo from mismatched or misaligned primer ends. These misaligned primers can be extended by PolIV. Exhibits no 3'-5' exonuclease (proofreading) activity. May be involved in translesional synthesis, in conjunction with the beta clamp from PolIII. This chain is DNA polymerase IV, found in Salmonella choleraesuis (strain SC-B67).